We begin with the raw amino-acid sequence, 502 residues long: T-complex protein 11-like X-linked protein 1 (502 aa).

The disordered stretch occupies residues 1–36 (MPKTEETVLQNDPSVAENGAPEPKTPGQSQKSKSFC).

It belongs to the TCP11 family.

The sequence is that of T-complex protein 11-like X-linked protein 1 from Homo sapiens (Human).